The primary structure comprises 505 residues: Maturase K (505 aa).

Belongs to the intron maturase 2 family. MatK subfamily.

It is found in the plastid. The protein localises to the chloroplast. Its function is as follows. Usually encoded in the trnK tRNA gene intron. Probably assists in splicing its own and other chloroplast group II introns. The protein is Maturase K of Chiococca alba (West Indian milkberry).